A 181-amino-acid polypeptide reads, in one-letter code: Ribulose bisphosphate carboxylase small subunit, chloroplastic 2 (181 aa).

Residues methionine 1 to glutamine 57 constitute a chloroplast transit peptide.

This sequence belongs to the RuBisCO small chain family. Heterohexadecamer of 8 large and 8 small subunits.

It is found in the plastid. Its subcellular location is the chloroplast. Functionally, ruBisCO catalyzes two reactions: the carboxylation of D-ribulose 1,5-bisphosphate, the primary event in carbon dioxide fixation, as well as the oxidative fragmentation of the pentose substrate. Both reactions occur simultaneously and in competition at the same active site. Although the small subunit is not catalytic it is essential for maximal activity. The sequence is that of Ribulose bisphosphate carboxylase small subunit, chloroplastic 2 from Nicotiana sylvestris (Wood tobacco).